Here is a 388-residue protein sequence, read N- to C-terminus: 2-Hydroxyacid oxidase (388 aa).

A disordered region spans residues 1–21; it reads MENQFKNNNNSSSIETSNQFS. The FMN hydroxy acid dehydrogenase domain maps to 26–384; it reads NRLDSFVSVS…NNSIIWDQNK (359 aa). Residue Tyr52 coordinates glyoxylate. Residues 105–107, Ser134, 156–158, and Thr184 each bind FMN; these read PWA and QLY. Tyr158 is a binding site for glyoxylate. Arg193 serves as a coordination point for glyoxylate. FMN contacts are provided by Lys255 and Ser277. Positions 279 and 282 each coordinate glyoxylate. His279 acts as the Proton acceptor in catalysis. Residues 310–314 and 333–334 contribute to the FMN site; these read DGGIR and GR.

This sequence belongs to the FMN-dependent alpha-hydroxy acid dehydrogenase family. In terms of assembly, homotetramer. FMN is required as a cofactor.

It catalyses the reaction glycolate + O2 = glyoxylate + H2O2. The catalysed reaction is a (2S)-2-hydroxycarboxylate + O2 = a 2-oxocarboxylate + H2O2. In terms of biological role, catalyzes the oxidation of glycolate to glyoxylate, with a reduction of O2 to H2O2. May use other 2-hydroxyacids as substrates. This Dictyostelium discoideum (Social amoeba) protein is 2-Hydroxyacid oxidase (haox).